We begin with the raw amino-acid sequence, 713 residues long: Histone-lysine N-methyltransferase SETDB2 (713 aa).

Positions 78 to 109 are disordered; that stretch reads PEVNTHRSNHTPVTQSEQENKSSAVPSASCDN. Residues 87–109 are compositionally biased toward polar residues; the sequence is HTPVTQSEQENKSSAVPSASCDN. In terms of domain architecture, MBD spans 161 to 233; that stretch reads LSLKGENPLQ…DNFSFNTYVQ (73 aa). A Pre-SET domain is found at 294–367; that stretch reads DSCDCSEGCI…MCQNRVIQHG (74 aa). Zn(2+) contacts are provided by C296, C298, C302, C308, C310, C348, C352, C354, and C359. An SET domain is found at 370–688; the sequence is VRLQVFKSEK…ARTELTWDYG (319 aa). 380–382 is an S-adenosyl-L-methionine binding site; sequence KGW. 2 stretches are compositionally biased toward basic and acidic residues: residues 511–534 and 579–592; these read EDKNGFKPAQEHVNSEARRAHEDL and TKQVLEVPGKKSQE. 2 disordered regions span residues 511–549 and 579–608; these read EDKNGFKPAQEHVNSEARRAHEDLSSNPAGDSEDTQLTE and TKQVLEVPGKKSQEEEPAASQSQQALCDEE. Residues R642 and 645–646 contribute to the S-adenosyl-L-methionine site; that span reads NH. Zn(2+) is bound by residues C648, C701, C703, and C708.

It belongs to the class V-like SAM-binding methyltransferase superfamily.

The protein localises to the nucleus. It localises to the chromosome. It carries out the reaction N(6),N(6)-dimethyl-L-lysyl(9)-[histone H3] + S-adenosyl-L-methionine = N(6),N(6),N(6)-trimethyl-L-lysyl(9)-[histone H3] + S-adenosyl-L-homocysteine + H(+). Functionally, histone methyltransferase involved in left-right axis specification in early development and mitosis. Specifically trimethylates 'Lys-9' of histone H3 (H3K9me3). H3K9me3 is a specific tag for epigenetic transcriptional repression that recruits HP1 (CBX1, CBX3 and/or CBX5) proteins to methylated histones. Contributes to H3K9me3 in both the interspersed repetitive elements and centromere-associated repeats. Plays a role in chromosome condensation and segregation during mitosis. This chain is Histone-lysine N-methyltransferase SETDB2 (Setdb2), found in Mus musculus (Mouse).